The sequence spans 66 residues: Large ribosomal subunit protein uL30 (66 aa).

The protein belongs to the universal ribosomal protein uL30 family. Part of the 50S ribosomal subunit.

The sequence is that of Large ribosomal subunit protein uL30 from Azorhizobium caulinodans (strain ATCC 43989 / DSM 5975 / JCM 20966 / LMG 6465 / NBRC 14845 / NCIMB 13405 / ORS 571).